Reading from the N-terminus, the 501-residue chain is ATP synthase subunit beta (501 aa).

153 to 160 (GGAGVGKT) is an ATP binding site.

Belongs to the ATPase alpha/beta chains family. In terms of assembly, F-type ATPases have 2 components, CF(1) - the catalytic core - and CF(0) - the membrane proton channel. CF(1) has five subunits: alpha(3), beta(3), gamma(1), delta(1), epsilon(1). CF(0) has three main subunits: a(1), b(2) and c(9-12). The alpha and beta chains form an alternating ring which encloses part of the gamma chain. CF(1) is attached to CF(0) by a central stalk formed by the gamma and epsilon chains, while a peripheral stalk is formed by the delta and b chains.

It localises to the cell inner membrane. The catalysed reaction is ATP + H2O + 4 H(+)(in) = ADP + phosphate + 5 H(+)(out). Produces ATP from ADP in the presence of a proton gradient across the membrane. The catalytic sites are hosted primarily by the beta subunits. In Cytophaga hutchinsonii (strain ATCC 33406 / DSM 1761 / CIP 103989 / NBRC 15051 / NCIMB 9469 / D465), this protein is ATP synthase subunit beta.